Here is a 79-residue protein sequence, read N- to C-terminus: DNA-directed RNA polymerase subunit omega (79 aa).

The protein belongs to the RNA polymerase subunit omega family. In terms of assembly, in cyanobacteria the RNAP catalytic core is composed of 2 alpha, 1 beta, 1 beta', 1 gamma and 1 omega subunit. When a sigma factor is associated with the core the holoenzyme is formed, which can initiate transcription.

It catalyses the reaction RNA(n) + a ribonucleoside 5'-triphosphate = RNA(n+1) + diphosphate. Its function is as follows. Promotes RNA polymerase assembly. Latches the N- and C-terminal regions of the beta' subunit thereby facilitating its interaction with the beta and alpha subunits. This Synechococcus sp. (strain JA-2-3B'a(2-13)) (Cyanobacteria bacterium Yellowstone B-Prime) protein is DNA-directed RNA polymerase subunit omega.